The sequence spans 256 residues: Imidazole glycerol phosphate synthase subunit hisF1 (256 aa).

Residues D11 and D130 contribute to the active site.

It belongs to the HisA/HisF family. Heterodimer of HisH and HisF.

Its subcellular location is the cytoplasm. The enzyme catalyses 5-[(5-phospho-1-deoxy-D-ribulos-1-ylimino)methylamino]-1-(5-phospho-beta-D-ribosyl)imidazole-4-carboxamide + L-glutamine = D-erythro-1-(imidazol-4-yl)glycerol 3-phosphate + 5-amino-1-(5-phospho-beta-D-ribosyl)imidazole-4-carboxamide + L-glutamate + H(+). It functions in the pathway amino-acid biosynthesis; L-histidine biosynthesis; L-histidine from 5-phospho-alpha-D-ribose 1-diphosphate: step 5/9. Its function is as follows. IGPS catalyzes the conversion of PRFAR and glutamine to IGP, AICAR and glutamate. The HisF subunit catalyzes the cyclization activity that produces IGP and AICAR from PRFAR using the ammonia provided by the HisH subunit. The chain is Imidazole glycerol phosphate synthase subunit hisF1 (hisF1) from Parasynechococcus marenigrum (strain WH8102).